An 88-amino-acid polypeptide reads, in one-letter code: Large ribosomal subunit protein eL37A (88 aa).

Zn(2+) contacts are provided by Cys-19, Cys-22, Cys-34, and Cys-37. The C4-type zinc-finger motif lies at 19–37 (CNRCGRRSFHVQKKTCSSC).

The protein belongs to the eukaryotic ribosomal protein eL37 family. Component of the large ribosomal subunit (LSU). Mature yeast ribosomes consist of a small (40S) and a large (60S) subunit. The 40S small subunit contains 1 molecule of ribosomal RNA (18S rRNA) and 33 different proteins (encoded by 57 genes). The large 60S subunit contains 3 rRNA molecules (25S, 5.8S and 5S rRNA) and 46 different proteins (encoded by 81 genes). Requires Zn(2+) as cofactor.

The protein localises to the cytoplasm. Functionally, component of the ribosome, a large ribonucleoprotein complex responsible for the synthesis of proteins in the cell. The small ribosomal subunit (SSU) binds messenger RNAs (mRNAs) and translates the encoded message by selecting cognate aminoacyl-transfer RNA (tRNA) molecules. The large subunit (LSU) contains the ribosomal catalytic site termed the peptidyl transferase center (PTC), which catalyzes the formation of peptide bonds, thereby polymerizing the amino acids delivered by tRNAs into a polypeptide chain. The nascent polypeptides leave the ribosome through a tunnel in the LSU and interact with protein factors that function in enzymatic processing, targeting, and the membrane insertion of nascent chains at the exit of the ribosomal tunnel. In Saccharomyces cerevisiae (strain ATCC 204508 / S288c) (Baker's yeast), this protein is Large ribosomal subunit protein eL37A.